The following is a 350-amino-acid chain: Sodium/calcium exchanger MaX1 (350 aa).

Transmembrane regions (helical) follow at residues 4 to 24, 39 to 59, 69 to 89, 101 to 121, 125 to 145, 202 to 222, 242 to 264, 276 to 296, 302 to 322, and 330 to 350; these read VNFLILLLGLVFLVKGSDYFV, FVIGLTLVAIGTSIPELASSI, IVIGNVVGSNIANVGLIVGVA, MLKRDGYIMLFSAVLFFVFAF, LSMLEAGLFVLLYIAYVFFLF, GGFAKDIFTLVLSCAAIVIGA, VIGTTLVAVGTSLPELVVTVSAA, VIGSNITNIFLILGLSGLFYP, MSLFFTTPVMIAISLILLIFI, and RWEGVVLMMFYVAFLVVLFYI.

The protein belongs to the Ca(2+):cation antiporter (CaCA) (TC 2.A.19) family.

Its subcellular location is the cell membrane. Calcium transport is inhibited by Na(+), K(+), Li(+), Mg(2+) or Mn(2+). In terms of biological role, catalyzes Na(+)/Ca(2+) exchange. The transport is electrogenic with a likely stoichiometry of 3 or more Na(+) for each Ca(2+). Is K(+)-independent. The chain is Sodium/calcium exchanger MaX1 (maX1) from Methanosarcina acetivorans (strain ATCC 35395 / DSM 2834 / JCM 12185 / C2A).